The following is a 122-amino-acid chain: Large ribosomal subunit protein uL14 (122 aa).

The protein belongs to the universal ribosomal protein uL14 family. In terms of assembly, part of the 50S ribosomal subunit. Forms a cluster with proteins L3 and L19. In the 70S ribosome, L14 and L19 interact and together make contacts with the 16S rRNA in bridges B5 and B8.

Its function is as follows. Binds to 23S rRNA. Forms part of two intersubunit bridges in the 70S ribosome. The polypeptide is Large ribosomal subunit protein uL14 (Nocardioides sp. (strain ATCC BAA-499 / JS614)).